The sequence spans 600 residues: Na(+)/dicarboxylate cotransporter 3 (600 aa).

The Cytoplasmic segment spans residues 1 to 16 (MAALAALAKKVWSARR). A helical membrane pass occupies residues 17-37 (LLVLLLVPLALLPILFALPPK). The Extracellular segment spans residues 38-55 (EGRCLYVILLMAVYWCTE). The chain crosses the membrane as a helical span at residues 56 to 76 (ALPLSVTALLPIILFPFMGIL). At 77-82 (PSSKVC) the chain is on the cytoplasmic side. A helical transmembrane segment spans residues 83–103 (PQYFLDTNFLFLSGLIMASAI). Topologically, residues 104–137 (EEWNLHRRIALKVLMLVGVQPARLILGMMVTTSF) are extracellular. A helical transmembrane segment spans residues 138-158 (LSMWLSNTASTAMMLPIASAI). Residues 159–229 (LKSLFGQREA…KEEEHRRNIW (71 aa)) lie on the Cytoplasmic side of the membrane. Residues 230–250 (KGFLISIPYSASIGGTATLTG) traverse the membrane as a helical segment. Topologically, residues 251–278 (TAPNLILLGQLKSFFPQCDVVNFGSWFI) are extracellular. Residues 279-299 (FAFPLMLLFLLVGWLWISFLY) traverse the membrane as a helical segment. Residues 300 to 336 (GGMSWRSWRKKKSKIRADAEDQAKAVIQEEFQNLGPI) lie on the Cytoplasmic side of the membrane. Residues 337–357 (KFAEQAVFILFCTFAILLFSR) traverse the membrane as a helical segment. At 358–372 (DPKFIPGWASLFAPG) the chain is on the extracellular side. Residues 373 to 393 (FVSDAVTGVAIVTILFFFPSQ) form a helical membrane-spanning segment. Topologically, residues 394-422 (KPSLKWWFDFKAPNSETEPLLSWKKAQET) are cytoplasmic. The helical intramembrane region spans 423-443 (VPWNIILLLGGGFAMAKGCEE). The Cytoplasmic segment spans residues 444–461 (SGLSAWIGGQLHPLEHVP). A helical transmembrane segment spans residues 462 to 482 (PLLAVLLITVVIAFFTEFASN). At 483–505 (TATIIIFLPVLAELAIRLHVHPL) the chain is on the extracellular side. Residues 506–526 (YLMIPGTVGCSYAFMLPVSTP) traverse the membrane as a helical segment. The Cytoplasmic segment spans residues 527-546 (PNSIAFSTGHLLVKDMVRTG). The helical transmembrane segment at 547–567 (LLMNLMGVLLLSLAMNTWAQT) threads the bilayer. At 568 to 600 (IFQLGTFPDWANTHAANATALPPALTNNTVQTF) the chain is on the extracellular side. Asn-584 and Asn-594 each carry an N-linked (GlcNAc...) asparagine glycan.

This sequence belongs to the SLC13A/DASS transporter (TC 2.A.47) family. NADC subfamily. In terms of tissue distribution, highly expressed in kidney, and at much lower levels in brain.

The protein resides in the cell membrane. It catalyses the reaction succinate(out) + 3 Na(+)(out) = succinate(in) + 3 Na(+)(in). It carries out the reaction 2-oxoglutarate(out) + 3 Na(+)(out) = 2-oxoglutarate(in) + 3 Na(+)(in). The catalysed reaction is N-acetyl-L-aspartate(out) + 3 Na(+)(out) = N-acetyl-L-aspartate(in) + 3 Na(+)(in). The enzyme catalyses fumarate(out) + 3 Na(+)(out) = fumarate(in) + 3 Na(+)(in). It catalyses the reaction glutarate(out) + 3 Na(+)(out) = glutarate(in) + 3 Na(+)(in). It carries out the reaction 2,2-dimethylsuccinate(out) + 3 Na(+)(out) = 2,2-dimethylsuccinate(in) + 3 Na(+)(in). The catalysed reaction is 2,3-dimethylsuccinate(out) + 3 Na(+)(out) = 2,3-dimethylsuccinate(in) + 3 Na(+)(in). The enzyme catalyses malate(out) + 3 Na(+)(out) = malate(in) + 3 Na(+)(in). It catalyses the reaction itaconate(out) + 3 Na(+)(out) = itaconate(in) + 3 Na(+)(in). Functionally, high-affinity sodium-dicarboxylate cotransporter that accepts a range of substrates with 4-6 carbon atoms, such as the citric acid cycle intermediates succinate and alpha-ketoglutarate (2-oxoglutarate), as well as other compounds including N-acetyl-L-aspartate. Transports the dicarboxylate into the cell with a probable stoichiometry of 3 Na(+) for 1 divalent dicarboxylate, rendering the process electrogenic. Can transport citrate in a Na(+)-dependent manner, recognizing the divalent form of citrate rather than the trivalent form which is normally found in blood. Imports itaconate in hepatocytes leading to activation of TFEB-dependent lysosomal biogenesis involved in antibacterial innate immune response. The polypeptide is Na(+)/dicarboxylate cotransporter 3 (Slc13a3) (Mus musculus (Mouse)).